The following is a 165-amino-acid chain: Xanthine-guanine phosphoribosyltransferase (165 aa).

5-phospho-alpha-D-ribose 1-diphosphate-binding positions include 41 to 42 (RG) and 98 to 106 (DDLTDTGKT). Aspartate 99 provides a ligand contact to Mg(2+). Residues aspartate 102 and isoleucine 145 each contribute to the guanine site. Positions 102 and 145 each coordinate xanthine. Residues 102–106 (DTGKT) and 144–145 (WI) each bind GMP.

Belongs to the purine/pyrimidine phosphoribosyltransferase family. XGPT subfamily. As to quaternary structure, homotetramer. Mg(2+) serves as cofactor.

The protein localises to the cell inner membrane. It catalyses the reaction GMP + diphosphate = guanine + 5-phospho-alpha-D-ribose 1-diphosphate. The enzyme catalyses XMP + diphosphate = xanthine + 5-phospho-alpha-D-ribose 1-diphosphate. It carries out the reaction IMP + diphosphate = hypoxanthine + 5-phospho-alpha-D-ribose 1-diphosphate. It participates in purine metabolism; GMP biosynthesis via salvage pathway; GMP from guanine: step 1/1. The protein operates within purine metabolism; XMP biosynthesis via salvage pathway; XMP from xanthine: step 1/1. Functionally, purine salvage pathway enzyme that catalyzes the transfer of the ribosyl-5-phosphate group from 5-phospho-alpha-D-ribose 1-diphosphate (PRPP) to the N9 position of the 6-oxopurines guanine and xanthine to form the corresponding ribonucleotides GMP (guanosine 5'-monophosphate) and XMP (xanthosine 5'-monophosphate), with the release of PPi. To a lesser extent, also acts on hypoxanthine. This is Xanthine-guanine phosphoribosyltransferase from Rhizobium meliloti (strain 1021) (Ensifer meliloti).